Here is a 228-residue protein sequence, read N- to C-terminus: ATP-dependent dethiobiotin synthetase BioD (228 aa).

Position 12–17 (12–17 (EIGKTT)) interacts with ATP. T16 is a binding site for Mg(2+). K37 is an active-site residue. S41 is a binding site for substrate. ATP is bound by residues D54, 116–119 (EGAG), and 205–207 (PRL). Positions 54 and 116 each coordinate Mg(2+).

It belongs to the dethiobiotin synthetase family. Homodimer. Mg(2+) is required as a cofactor.

It is found in the cytoplasm. It carries out the reaction (7R,8S)-7,8-diammoniononanoate + CO2 + ATP = (4R,5S)-dethiobiotin + ADP + phosphate + 3 H(+). It participates in cofactor biosynthesis; biotin biosynthesis; biotin from 7,8-diaminononanoate: step 1/2. In terms of biological role, catalyzes a mechanistically unusual reaction, the ATP-dependent insertion of CO2 between the N7 and N8 nitrogen atoms of 7,8-diaminopelargonic acid (DAPA, also called 7,8-diammoniononanoate) to form a ureido ring. This chain is ATP-dependent dethiobiotin synthetase BioD, found in Pseudomonas aeruginosa (strain UCBPP-PA14).